The primary structure comprises 102 residues: Small ribosomal subunit protein uS10 (102 aa).

It belongs to the universal ribosomal protein uS10 family. Part of the 30S ribosomal subunit.

Its function is as follows. Involved in the binding of tRNA to the ribosomes. This chain is Small ribosomal subunit protein uS10, found in Rhodospirillum centenum (strain ATCC 51521 / SW).